Consider the following 90-residue polypeptide: Small ribosomal subunit protein uS17 (90 aa).

The protein belongs to the universal ribosomal protein uS17 family. Part of the 30S ribosomal subunit.

One of the primary rRNA binding proteins, it binds specifically to the 5'-end of 16S ribosomal RNA. This chain is Small ribosomal subunit protein uS17, found in Burkholderia mallei (strain NCTC 10247).